We begin with the raw amino-acid sequence, 366 residues long: Histidinol-phosphate aminotransferase (366 aa).

An N6-(pyridoxal phosphate)lysine modification is found at K226.

It belongs to the class-II pyridoxal-phosphate-dependent aminotransferase family. Histidinol-phosphate aminotransferase subfamily. Requires pyridoxal 5'-phosphate as cofactor.

The catalysed reaction is L-histidinol phosphate + 2-oxoglutarate = 3-(imidazol-4-yl)-2-oxopropyl phosphate + L-glutamate. It functions in the pathway amino-acid biosynthesis; L-histidine biosynthesis; L-histidine from 5-phospho-alpha-D-ribose 1-diphosphate: step 7/9. This Methanosarcina barkeri (strain Fusaro / DSM 804) protein is Histidinol-phosphate aminotransferase.